The following is a 95-amino-acid chain: Aspartyl/glutamyl-tRNA(Asn/Gln) amidotransferase subunit C (95 aa).

The protein belongs to the GatC family. Heterotrimer of A, B and C subunits.

It carries out the reaction L-glutamyl-tRNA(Gln) + L-glutamine + ATP + H2O = L-glutaminyl-tRNA(Gln) + L-glutamate + ADP + phosphate + H(+). The catalysed reaction is L-aspartyl-tRNA(Asn) + L-glutamine + ATP + H2O = L-asparaginyl-tRNA(Asn) + L-glutamate + ADP + phosphate + 2 H(+). Functionally, allows the formation of correctly charged Asn-tRNA(Asn) or Gln-tRNA(Gln) through the transamidation of misacylated Asp-tRNA(Asn) or Glu-tRNA(Gln) in organisms which lack either or both of asparaginyl-tRNA or glutaminyl-tRNA synthetases. The reaction takes place in the presence of glutamine and ATP through an activated phospho-Asp-tRNA(Asn) or phospho-Glu-tRNA(Gln). The protein is Aspartyl/glutamyl-tRNA(Asn/Gln) amidotransferase subunit C of Dechloromonas aromatica (strain RCB).